The primary structure comprises 294 residues: ATP phosphoribosyltransferase (294 aa).

The protein belongs to the ATP phosphoribosyltransferase family. Long subfamily. It depends on Mg(2+) as a cofactor.

It localises to the cytoplasm. It carries out the reaction 1-(5-phospho-beta-D-ribosyl)-ATP + diphosphate = 5-phospho-alpha-D-ribose 1-diphosphate + ATP. Its pathway is amino-acid biosynthesis; L-histidine biosynthesis; L-histidine from 5-phospho-alpha-D-ribose 1-diphosphate: step 1/9. Feedback inhibited by histidine. Catalyzes the condensation of ATP and 5-phosphoribose 1-diphosphate to form N'-(5'-phosphoribosyl)-ATP (PR-ATP). Has a crucial role in the pathway because the rate of histidine biosynthesis seems to be controlled primarily by regulation of HisG enzymatic activity. This chain is ATP phosphoribosyltransferase, found in Chlorobium phaeovibrioides (strain DSM 265 / 1930) (Prosthecochloris vibrioformis (strain DSM 265)).